An 816-amino-acid polypeptide reads, in one-letter code: Nicotine 6-hydroxylase large subunit (816 aa).

Glutamate 745 contacts Mo-molybdopterin cytosine dinucleotide.

It belongs to the xanthine dehydrogenase family. In terms of assembly, heterotrimer composed of a large subunit (NdhL), a medium subunit (NdhM) and a small subunit (NdhS). It depends on Mo-molybdopterin cytosine dinucleotide as a cofactor.

It is found in the cytoplasm. The catalysed reaction is (R)-nicotine + A + H2O = (R)-6-hydroxynicotine + AH2. The enzyme catalyses (S)-nicotine + A + H2O = (S)-6-hydroxynicotine + AH2. Its pathway is alkaloid degradation; nicotine degradation; 6-hydroxypseudooxynicotine from nicotine (R-isomer route): step 1/2. It participates in alkaloid degradation; nicotine degradation; 6-hydroxypseudooxynicotine from nicotine (S-isomer route): step 1/2. Nicotine dehydrogenase activity is inhibited by tungsten. Component of the nicotine 6-hydroxylase, which is involved in the degradation of nicotine. Catalyzes the hydroxylation of the pyridine ring at C6 to form 6-hydroxynicotine. Can use both L-nicotine and D-nicotine. This Paenarthrobacter nicotinovorans (Arthrobacter nicotinovorans) protein is Nicotine 6-hydroxylase large subunit.